The sequence spans 792 residues: Carboxysome assembly protein CsoS2 (792 aa).

Residues 1-15 (MAKQSSRELALERRK) are compositionally biased toward basic and acidic residues. An N-terminal domain region spans residues 1-235 (MAKQSSRELA…EISQRVRELR (235 aa)). 3 disordered regions span residues 1–259 (MAKQ…RNGS), 280–299 (QVVT…NEAS), and 338–359 (HGNR…DEPG). An N-repeat 1 repeat occupies 7 to 22 (RELALERRKALSNSGK). 2 stretches are compositionally biased toward polar residues: residues 17–36 (LSNS…NRIR) and 69–82 (DTSF…SGAS). Residues 94–109 (RELVLARRDELSRRGQ) form an N-repeat 2 repeat. 2 stretches are compositionally biased toward basic and acidic residues: residues 97-106 (VLARRDELSR) and 113-126 (KSKD…EKIS). Residues 161–175 (DTVSRLSSRNSTSRP) are compositionally biased toward polar residues. N-repeat repeat units lie at residues 187–202 (RALV…KHGK) and 225–240 (REIS…KSGA). Over residues 218 to 236 (GDPDLSSREISQRVRELRS) the composition is skewed to basic and acidic residues. The middle region stretch occupies residues 240–615 (ATGKKRSGAC…VQACGSDAPA (376 aa)). 6 M-repeat repeats span residues 270-319 (KVGL…DTFC), 330-379 (KVAV…NQYC), 388-427 (KVGQ…GDQY), 441-490 (KVGS…NTFC), 500-549 (KVGL…SGWC), and 560-609 (RTPK…VQAC). Disordered regions lie at residues 608–662 (ACGS…GSQI) and 687–792 (HFKS…GARG). Residues 616 to 792 (GSNDHQGSSE…LITVSGGARG (177 aa)) are C-terminal domain. Composition is skewed to polar residues over residues 618 to 636 (NDHQ…SVQS) and 651 to 662 (VTGTSYEQGSQI). C-repeat repeat units lie at residues 633-678 (SVQS…GTEQ) and 703-738 (TRPE…EGAS). Residues 763–792 (EVSQPMSRVTGSSGNTDQGSLITVSGGARG) form a C-terminal peptide (CTP) region. Polar residues predominate over residues 764–785 (VSQPMSRVTGSSGNTDQGSLIT).

This sequence belongs to the CsoS2 family. Probably interacts with the carboxysome major shell protein CsoS1 via the N-terminal domain; this complex probably also interacts with RuBisCO. In terms of processing, has been suggested to undergo ribosomal frameshifting, as does its ortholog in H.neapolitanus. The exact position of the putative frameshift is not given, but it would probably occur in the sixth M-repeat and remove the C-terminus.

It localises to the carboxysome. Its function is as follows. Required for alpha-carboxysome (Cb) assembly, mediates interaction between RuBisCO and the Cb shell. The protein is probably intrinsically disordered. The C-terminal repeats act as the encapsulation signal to target proteins to the Cb; they are necessary and sufficient to target both CsoS2 and foreign proteins to the Cb. The N-terminal repeats of this protein bind simultaneously to both subunits of RuBisCO. Probably also interacts with the major shell proteins (CsoS1); that interaction would increase the local concentration of CsoS2 so that it can condense RuBisCO and full carboxysomes can be formed. This Prochlorococcus marinus (strain MIT 9313) protein is Carboxysome assembly protein CsoS2.